Consider the following 305-residue polypeptide: Ribosomal RNA small subunit methyltransferase H (305 aa).

Residues 30–32 (GGH), Asp-49, Phe-74, Asp-96, and Gln-103 each bind S-adenosyl-L-methionine.

This sequence belongs to the methyltransferase superfamily. RsmH family.

It is found in the cytoplasm. The catalysed reaction is cytidine(1402) in 16S rRNA + S-adenosyl-L-methionine = N(4)-methylcytidine(1402) in 16S rRNA + S-adenosyl-L-homocysteine + H(+). Its function is as follows. Specifically methylates the N4 position of cytidine in position 1402 (C1402) of 16S rRNA. The sequence is that of Ribosomal RNA small subunit methyltransferase H from Francisella tularensis subsp. mediasiatica (strain FSC147).